The following is an 830-amino-acid chain: Adhesion G protein-coupled receptor E2 (830 aa).

A signal peptide spans 1-22 (MRHGHPRLLPGLLMLLLLPLGA). Residues 23–540 (AAQKTSGCAR…MAHYDVQEED (518 aa)) are Extracellular-facing. An EGF-like 1 domain is found at 26 to 68 (KTSGCARWCPPKSTCVNATTCRCSPGFSSLSGEIFSSPLESCD). Intrachain disulfides connect cysteine 30–cysteine 40, cysteine 34–cysteine 46, cysteine 48–cysteine 67, cysteine 73–cysteine 87, and cysteine 81–cysteine 96. Asparagine 42 is a glycosylation site (N-linked (GlcNAc...) asparagine). In terms of domain architecture, EGF-like 1; calcium-binding spans 69-108 (DIDECGPPPLVSCGRLADCQNTEGSYHCMCSPGYALASGA). A glycan (N-linked (GlcNAc...) asparagine) is linked at asparagine 113. Residues 121–159 (DVDECQLKPRVCKSRGICTNTKGSYTCKCPPGFELNLGD) enclose the EGF-like 2; calcium-binding domain. Disulfide bonds link cysteine 125-cysteine 138, cysteine 132-cysteine 147, cysteine 169-cysteine 182, cysteine 176-cysteine 191, cysteine 218-cysteine 231, and cysteine 225-cysteine 240. One can recognise an EGF-like 3; calcium-binding domain in the interval 165 to 203 (DVNECTSGQNPCHNSTHCLNNIGGYECRCRPGWKPVPGS). N-linked (GlcNAc...) asparagine glycosylation occurs at asparagine 178. The 40-residue stretch at 214–253 (DVDECSSGKHTCHYSTVCINTVGSYKCRCRRGWKPKPRFQ) folds into the EGF-like 4; calcium-binding domain. N-linked (GlcNAc...) asparagine glycans are attached at residues asparagine 258, asparagine 348, asparagine 361, and asparagine 379. The 180-residue stretch at 358-537 (WTFNASAGTD…AVLMAHYDVQ (180 aa)) folds into the GAIN-B domain. Intrachain disulfides connect cysteine 489–cysteine 519 and cysteine 507–cysteine 521. The interval 489-537 (CVFWEHSQDECGHWSTRGCTVVDSGDTSTTCQCTHLSSFAVLMAHYDVQ) is GPS. A helical membrane pass occupies residues 541-561 (LVLPVITYVGLGLSLLCLLLA). The Cytoplasmic segment spans residues 562–576 (ALTFLLCKAIQNTST). A helical membrane pass occupies residues 577-597 (SLHLQLLICLFLAHLLFLMAI). Residues 598 to 603 (DRTEIK) are Extracellular-facing. The chain crosses the membrane as a helical span at residues 604-624 (VLCSIIAGALHYLYLASFTWM). Residues 625–651 (LLEGLHLFLTARNLMVVNYSSVSMLMK) lie on the Cytoplasmic side of the membrane. The chain crosses the membrane as a helical span at residues 652-672 (KLMYPVGYGVPTLIVAISAAS). Residues 673–690 (RSHLYGTRTRCWLNPEER) lie on the Extracellular side of the membrane. The chain crosses the membrane as a helical span at residues 691–711 (FIWSFLGPVCTIFSVNLGFFL). Topologically, residues 712–744 (MTLWILKSKLSSLNSDVSTLQNTRMLTFKAIAQ) are cytoplasmic. A helical membrane pass occupies residues 745 to 765 (LFILGCTWCLGILQVGPAAHV). Over 766–767 (MA) the chain is Extracellular. Residues 768-788 (YLFTIINSLQGVFIFLVYCLL) traverse the membrane as a helical segment. Over 789 to 830 (SQQVREEYGKWFKGIRKTRAESEKYTLSSRAMSDVNKPMMVN) the chain is Cytoplasmic.

This sequence belongs to the G-protein coupled receptor 2 family. Adhesion G-protein coupled receptor (ADGR) subfamily. Forms a heterodimer, consisting of a large extracellular region non-covalently linked to a seven-transmembrane moiety. Interacts with chondroitin sulfate; the interaction with chondroitin sulfate is calcium-dependent. Interacts with CD55. In terms of processing, autoproteolytically cleaved into 2 subunits, an extracellular alpha subunit and a seven-transmembrane beta subunit.

It is found in the cell membrane. Its subcellular location is the cell projection. It localises to the ruffle membrane. Functionally, cell surface receptor that binds to the chondroitin sulfate moiety of glycosaminoglycan chains and promotes cell attachment. Promotes granulocyte chemotaxis, degranulation and adhesion. In macrophages, promotes the release of inflammatory cytokines, including IL8 and TNF. Signals probably through G-proteins. This is Adhesion G protein-coupled receptor E2 (ADGRE2) from Canis lupus familiaris (Dog).